The sequence spans 123 residues: Heat-labile enterotoxin IIA, B chain (123 aa).

A signal peptide spans 1 to 19 (MSSKKIIGAFVLMTGILSG). A disulfide bond links cysteine 33 and cysteine 104.

In terms of assembly, heterohexamer of one A chain and of five B chains.

Functionally, the biological activity of the toxin is produced by the A chain, which activates intracellular adenyl cyclase. This Escherichia coli protein is Heat-labile enterotoxin IIA, B chain.